The primary structure comprises 60 residues: MKVLPVLFLTLLVLISIPAETFCQDYNHDRDIVPPRGKRNDFFRSDVSRDDESHPSPGQK.

The signal sequence occupies residues 1–23 (MKVLPVLFLTLLVLISIPAETFC). Residue Arg-36 is modified to Arginine amide. Residues 36–54 (RGKRNDFFRSDVSRDDESH) show a composition bias toward basic and acidic residues. The disordered stretch occupies residues 36-60 (RGKRNDFFRSDVSRDDESHPSPGQK). Positions 37 to 60 (GKRNDFFRSDVSRDDESHPSPGQK) are excised as a propeptide.

This sequence belongs to the non-disulfide-bridged peptide (NDBP) superfamily. Expressed by the venom gland.

It is found in the secreted. In terms of biological role, probable antimicrobial peptide. Has no inhibitory activity against herpes simplex virus type 1 (HSV-1). The chain is Antimicrobial peptide Eval151 from Euscorpiops validus (Scorpion).